Reading from the N-terminus, the 443-residue chain is Tryptophan synthase beta chain 2, chloroplastic (443 aa).

The interval 1-32 is disordered; sequence PGPPPPAPEGRRRRGRGRNAAGQAVAAEASPA. The N-terminal 45 residues, 1–45, are a transit peptide targeting the chloroplast; sequence PGPPPPAPEGRRRRGRGRNAAGQAVAAEASPAAVEMGNGAAAPGL. Over residues 18–32 the composition is skewed to low complexity; the sequence is RNAAGQAVAAEASPA. An N6-(pyridoxal phosphate)lysine modification is found at lysine 138.

Belongs to the TrpB family. As to quaternary structure, tetramer of two alpha and two beta chains. Pyridoxal 5'-phosphate serves as cofactor.

The protein localises to the plastid. It is found in the chloroplast. It carries out the reaction (1S,2R)-1-C-(indol-3-yl)glycerol 3-phosphate + L-serine = D-glyceraldehyde 3-phosphate + L-tryptophan + H2O. It functions in the pathway amino-acid biosynthesis; L-tryptophan biosynthesis; L-tryptophan from chorismate: step 5/5. In terms of biological role, the beta subunit is responsible for the synthesis of L-tryptophan from indole and L-serine. The chain is Tryptophan synthase beta chain 2, chloroplastic (TSB2) from Zea mays (Maize).